The following is a 504-amino-acid chain: Aromatic and large neutral amino acid transporter 5-3 (504 aa).

Residues methionine 1–serine 24 are disordered. Over residues methionine 8–serine 24 the composition is skewed to basic and acidic residues. Transmembrane regions (helical) follow at residues tyrosine 76 to tryptophan 96, histidine 138 to leucine 158, phenylalanine 165 to serine 185, phenylalanine 206 to valine 226, isoleucine 233 to phenylalanine 253, and valine 256 to isoleucine 276. Asparagine 310 carries an N-linked (GlcNAc...) asparagine glycan. The next 6 membrane-spanning stretches (helical) occupy residues leucine 324–alanine 344, glutamate 356–alanine 376, isoleucine 381–isoleucine 401, cysteine 406–valine 426, isoleucine 436–isoleucine 456, and methionine 475–valine 495.

This sequence belongs to the SLC43A transporter (TC 2.A.1.44) family.

It is found in the cell membrane. It carries out the reaction L-tyrosine(in) = L-tyrosine(out). L-tyrosine uptake is stimulated in trans by aromatic and large neutral amino acids, but not smaller or charged amino acids. In terms of biological role, L-tyrosine transporter that is essential for parasite survival and virulence. May also act as an aromatic and large neutral amino acid transporter. Does not cotransport other charged ions. Involved in amino acid homeostasis by facilitating the net uptake of L-tyrosine and maintaining intracellular pools of aromatic and large neutral amino acids through exchange. The sequence is that of Aromatic and large neutral amino acid transporter 5-3 from Toxoplasma gondii.